The primary structure comprises 219 residues: Cytidylate kinase (219 aa).

An ATP-binding site is contributed by 10-18 (GPAAAGKST).

Belongs to the cytidylate kinase family. Type 1 subfamily.

It is found in the cytoplasm. It catalyses the reaction CMP + ATP = CDP + ADP. The enzyme catalyses dCMP + ATP = dCDP + ADP. This chain is Cytidylate kinase, found in Staphylococcus aureus (strain JH9).